The following is a 221-amino-acid chain: uncharacterized protein (221 aa).

The signal sequence occupies residues 1-23; the sequence is MNKLIQLALFFTLMLTGCSNSST. The segment at 67–221 is disordered; the sequence is ELGKRKAKEE…QGYIDPEDAP (155 aa). The segment covering 68–150 has biased composition (basic and acidic residues); sequence LGKRKAKEEA…EQKANAEKKR (83 aa). A coiled-coil region spans residues 70 to 161; it reads KRKAKEEAEK…SQAQRQQTEA (92 aa). The span at 152 to 161 shows a compositional bias: polar residues; that stretch reads SQAQRQQTEA. The segment covering 162–174 has biased composition (low complexity); the sequence is PSSNSQDPPSSSS. Residues 175–184 are compositionally biased toward polar residues; that stretch reads QTDKTIQQPA. A compositionally biased stretch (basic and acidic residues) spans 195-205; it reads YEERKKWHDDQ.

This is an uncharacterized protein from Bacillus subtilis (strain 168).